We begin with the raw amino-acid sequence, 597 residues long: MREVLYMTDKKNLRTPIVCVMGHVDHGKTTLLDKIRGTAIVSGEAGAITQHIGATEVPIDVIVNKLGDPKLRDRFMVPGLLFIDTPGHHAFTTLRSRGGALADLAIVVVDINEGFKPQTYESLQILKRFKTPFVVVANKIDRIGGWASQKDMPFAATFKKQSPDVQGRLETKLYEVIGELYNQGFAAERYDRVTNFQKTLGVVPASAVTGEGIPDVLMVLLGLAQKFLEANLQYSAKNPGVGTVLEVKEEKGLGATLDVILYDGTLKKGDTVVIGSLGEPIQTKVRALLKPRELSEIRYESKFKQVSEVTAAAGVKISAPGLDGALAGSPIRVATEETLGEIVAQVKSEIDEVRIDTGSVGVMIKADTLGSLEALVHEFQKDEVPIRKAEVGDISHRDAVEASTVEDPLYSVLIGFNVKVHPDARDFLQESTVKVFTSDVIYRLVEDYQKYVKEQQELAEKKIFETIIRPGKFKILPGCVFRQSKPAVVGVRVLGGVVRTNADVMLENGNVVGKIKGLQSEGENIPSAKVGKEVAMAIEGATVGRQIKEEDVLYINVPERHAKVLEHEIYDSLSTDEKETLDIFLTLKRKNNPFWAK.

The region spanning 13–229 is the tr-type G domain; that stretch reads LRTPIVCVMG…LLGLAQKFLE (217 aa). The tract at residues 22 to 29 is G1; it reads GHVDHGKT. Position 22-29 (22-29) interacts with GTP; it reads GHVDHGKT. The segment at 47-51 is G2; it reads AITQH. The tract at residues 84–87 is G3; it reads DTPG. GTP contacts are provided by residues 84-88 and 138-141; these read DTPGH and NKID. Residues 138 to 141 are G4; that stretch reads NKID. The tract at residues 206-208 is G5; the sequence is SAV.

It belongs to the TRAFAC class translation factor GTPase superfamily. Classic translation factor GTPase family. IF-2 subfamily.

Function in general translation initiation by promoting the binding of the formylmethionine-tRNA to ribosomes. Seems to function along with eIF-2. The polypeptide is Probable translation initiation factor IF-2 (Methanosarcina acetivorans (strain ATCC 35395 / DSM 2834 / JCM 12185 / C2A)).